The sequence spans 297 residues: E3 ubiquitin-protein ligase TRIM52 (297 aa).

The RING-type; degenerate zinc finger occupies 20–62; that stretch reads CAICLDYFKDPVSISCGHNFCRGCVTQLWSKEDEEDQNEEEDE. Residues 72 to 167 form an important for rapid proteolytic degradation by the proteasome region; that stretch reads VGAMDGWDGS…DEDEDEELYP (96 aa). The B box-type zinc-finger motif lies at 222–263; that stretch reads NDQGMCFKHQEALKLFCEVDKEAICVVCRESRSHKQHSVLPL. Residues C227, H230, C249, and H255 each contribute to the Zn(2+) site.

It belongs to the TRIM/RBCC family. (Microbial infection) Interacts with Japanese encephalitis virus non-structural protein 2 (NS2A); mediates the ubiquitination of NS2A, targeting it for proteasome-mediated degradation. In terms of processing, autoubiquitinated. Polyubiquitinated. Undergoes extremely rapid proteolytic degradation by the proteasome.

The protein localises to the cytoplasm. It is found in the cytosol. The protein resides in the nucleus. It carries out the reaction S-ubiquitinyl-[E2 ubiquitin-conjugating enzyme]-L-cysteine + [acceptor protein]-L-lysine = [E2 ubiquitin-conjugating enzyme]-L-cysteine + N(6)-ubiquitinyl-[acceptor protein]-L-lysine.. It functions in the pathway protein modification; protein ubiquitination. E3 ubiquitin-protein ligase. Positively regulates the NF-kappa-B signaling pathway. Functionally, (Microbial infection) Exhibits antiviral activity against Japanese encephalitis virus (JEV). Ubiquitinates the viral non-structural protein 2 (NS2A) and targets it for proteasome-mediated degradation. The polypeptide is E3 ubiquitin-protein ligase TRIM52 (TRIM52) (Homo sapiens (Human)).